Reading from the N-terminus, the 298-residue chain is HTH-type transcriptional regulator ArgP (298 aa).

The HTH lysR-type domain occupies 4–60; that stretch reads LDYRWIEALDSVVSKGSFERAAEQLFISQSAVSQRIKQLEKYLAQPVLIREQPPRPT. Positions 21-40 form a DNA-binding region, H-T-H motif; that stretch reads FERAAEQLFISQSAVSQRIK.

It belongs to the LysR transcriptional regulatory family. As to quaternary structure, homodimer.

Its function is as follows. Controls the transcription of genes involved in arginine and lysine metabolism. The polypeptide is HTH-type transcriptional regulator ArgP (Vibrio cholerae serotype O1 (strain ATCC 39541 / Classical Ogawa 395 / O395)).